We begin with the raw amino-acid sequence, 375 residues long: Probable 1-acyl-sn-glycerol-3-phosphate acyltransferase 5 (375 aa).

2 consecutive transmembrane segments (helical) span residues 21–41 (IICL…WGFL) and 57–77 (CVSF…EKIN). The HXXXXD motif motif lies at 100–105 (HRTEVD). The next 2 helical transmembrane spans lie at 312–332 (YLIN…LTFF) and 337–357 (WFRI…HFNL).

This sequence belongs to the 1-acyl-sn-glycerol-3-phosphate acyltransferase family. As to expression, widely expressed at low level.

Its subcellular location is the membrane. It carries out the reaction a 1-acyl-sn-glycero-3-phosphate + an acyl-CoA = a 1,2-diacyl-sn-glycero-3-phosphate + CoA. It functions in the pathway phospholipid metabolism; CDP-diacylglycerol biosynthesis; CDP-diacylglycerol from sn-glycerol 3-phosphate: step 2/3. Its function is as follows. May convert lysophosphatidic acid (LPA) into phosphatidic acid by incorporating acyl moiety at the 2 position. Has no activity when expressed in bacteria or yeast. The chain is Probable 1-acyl-sn-glycerol-3-phosphate acyltransferase 5 (LPAT5) from Arabidopsis thaliana (Mouse-ear cress).